Here is a 453-residue protein sequence, read N- to C-terminus: MNRRIFGLENEYGVTCTFRGQRRLTPDEVARYLFRRVVSWGRSSNVFLRNGARLYLDVGSHPEYATGECDSVTDLIAHDKAGERILEGLLVDAQKRLHDEGIFGDVYLFKNNTDSAGNSYGCHENYLVSRHGDFAKLADVLIPFLVTRQLICGAGKVLQTPRGAVYSVSQRAEHIWEGVSSATTRSRPIINTRDEPHADAERFRRLHVIVGDSNMSETTMLLKVASTDLVLRMIEAGIVMRDLTLDNPIRAIREISHDMTGRREVRLANGREASALDIQGEYLSKARDFVDRRELGTPAVERALSLWERTLKAIESGDLSGIEREIDWVIKYRLIERYRAQNNLGLASPRVAQLDLAYHDIHRPRGLYYLLERKGAVTRVVDDLRVFEAKSVPPQTTRARLRGEFIKRAQERRRDFTVDWVHLKLNDQAQRTVLCKDPFKSHDERVEKLIASM.

Residue glutamate 9 coordinates Mg(2+). Arginine 53 contributes to the ATP binding site. Position 55 (tyrosine 55) interacts with Mg(2+). Aspartate 57 (proton acceptor) is an active-site residue. Glutamate 63 is a Mg(2+) binding site. The ATP site is built by threonine 66 and tryptophan 420.

This sequence belongs to the Pup ligase/Pup deamidase family. Pup-conjugating enzyme subfamily.

The enzyme catalyses ATP + [prokaryotic ubiquitin-like protein]-L-glutamate + [protein]-L-lysine = ADP + phosphate + N(6)-([prokaryotic ubiquitin-like protein]-gamma-L-glutamyl)-[protein]-L-lysine.. It participates in protein degradation; proteasomal Pup-dependent pathway. Its pathway is protein modification; protein pupylation. Functionally, catalyzes the covalent attachment of the prokaryotic ubiquitin-like protein modifier Pup to the proteasomal substrate proteins, thereby targeting them for proteasomal degradation. This tagging system is termed pupylation. The ligation reaction involves the side-chain carboxylate of the C-terminal glutamate of Pup and the side-chain amino group of a substrate lysine. This chain is Pup--protein ligase, found in Kribbella flavida (strain DSM 17836 / JCM 10339 / NBRC 14399).